A 214-amino-acid polypeptide reads, in one-letter code: Protein FAM167A (214 aa).

2 disordered regions span residues 1 to 26 (MSVP…PDDH) and 59 to 108 (PFPR…LSTG). Positions 118 to 156 (EAIAWLRKELTEMRLQDQQLARQLMRLRGDINKLKIEHT) form a coiled coil.

It belongs to the FAM167 (SEC) family. Expressed in skin, including primary keratinocytes, spleen, kidney, leukocytes, testis, lung, small intestine and prostate.

The sequence is that of Protein FAM167A (FAM167A) from Homo sapiens (Human).